Consider the following 254-residue polypeptide: Leucyl/phenylalanyl-tRNA--protein transferase (254 aa).

It belongs to the L/F-transferase family.

The protein resides in the cytoplasm. It carries out the reaction N-terminal L-lysyl-[protein] + L-leucyl-tRNA(Leu) = N-terminal L-leucyl-L-lysyl-[protein] + tRNA(Leu) + H(+). The catalysed reaction is N-terminal L-arginyl-[protein] + L-leucyl-tRNA(Leu) = N-terminal L-leucyl-L-arginyl-[protein] + tRNA(Leu) + H(+). The enzyme catalyses L-phenylalanyl-tRNA(Phe) + an N-terminal L-alpha-aminoacyl-[protein] = an N-terminal L-phenylalanyl-L-alpha-aminoacyl-[protein] + tRNA(Phe). Its function is as follows. Functions in the N-end rule pathway of protein degradation where it conjugates Leu, Phe and, less efficiently, Met from aminoacyl-tRNAs to the N-termini of proteins containing an N-terminal arginine or lysine. This chain is Leucyl/phenylalanyl-tRNA--protein transferase, found in Burkholderia cenocepacia (strain HI2424).